Consider the following 145-residue polypeptide: Hemoglobin subunit beta-2 (145 aa).

The 144-residue stretch at 2 to 145 (HLTDQEIKYI…VADAVGKGYH (144 aa)) folds into the Globin domain. Heme b-binding residues include His-63 and His-91.

The protein belongs to the globin family. Red blood cells.

This chain is Hemoglobin subunit beta-2, found in Telmatobius peruvianus (Andean frog).